The primary structure comprises 126 residues: 5-carboxymethyl-2-hydroxymuconate Delta-isomerase (126 aa).

Proline 2 acts as the Proton acceptor; via imino nitrogen in catalysis.

In terms of assembly, homotrimer.

It catalyses the reaction (2E,4Z)-5-hydroxypenta-2,4-diene-1,2,5-tricarboxylate = (3E,5R)-5-carboxy-2-oxohept-3-enedioate. Its pathway is aromatic compound metabolism; 4-hydroxyphenylacetate degradation; pyruvate and succinate semialdehyde from 4-hydroxyphenylacetate: step 4/7. Transforms 5-carboxymethyl-2-hydroxy-muconic acid (CHM) into 5-oxo-pent-3-ene-1,2,5-tricarboxylic acid (OPET). This Escherichia coli protein is 5-carboxymethyl-2-hydroxymuconate Delta-isomerase (hpcD).